The chain runs to 133 residues: Small ribosomal subunit protein uS8 (133 aa).

It belongs to the universal ribosomal protein uS8 family. As to quaternary structure, part of the 30S ribosomal subunit.

Functionally, one of the primary rRNA binding proteins, it binds directly to 16S rRNA central domain where it helps coordinate assembly of the platform of the 30S subunit. The protein is Small ribosomal subunit protein uS8 of Saccharolobus solfataricus (strain ATCC 35092 / DSM 1617 / JCM 11322 / P2) (Sulfolobus solfataricus).